The primary structure comprises 106 residues: Large ribosomal subunit protein uL24 (106 aa).

The disordered stretch occupies residues 69 to 106 (SNLNPVDPKTGKATRVGRKVSSEGTLVRYSKKSGEEIK).

Belongs to the universal ribosomal protein uL24 family. Part of the 50S ribosomal subunit.

One of two assembly initiator proteins, it binds directly to the 5'-end of the 23S rRNA, where it nucleates assembly of the 50S subunit. Functionally, one of the proteins that surrounds the polypeptide exit tunnel on the outside of the subunit. This chain is Large ribosomal subunit protein uL24, found in Bacteroides fragilis (strain ATCC 25285 / DSM 2151 / CCUG 4856 / JCM 11019 / LMG 10263 / NCTC 9343 / Onslow / VPI 2553 / EN-2).